The sequence spans 595 residues: Aspartate--tRNA ligase (595 aa).

Glu173 provides a ligand contact to L-aspartate. Positions 197 to 200 (QLFK) are aspartate. Arg219 lines the L-aspartate pocket. ATP is bound by residues 219 to 221 (RDE) and Gln228. Position 449 (His449) interacts with L-aspartate. Glu483 lines the ATP pocket. Residue Arg490 coordinates L-aspartate. 535–538 (GLDR) is a binding site for ATP.

This sequence belongs to the class-II aminoacyl-tRNA synthetase family. Type 1 subfamily. In terms of assembly, homodimer.

It is found in the cytoplasm. The catalysed reaction is tRNA(Asp) + L-aspartate + ATP = L-aspartyl-tRNA(Asp) + AMP + diphosphate. In terms of biological role, catalyzes the attachment of L-aspartate to tRNA(Asp) in a two-step reaction: L-aspartate is first activated by ATP to form Asp-AMP and then transferred to the acceptor end of tRNA(Asp). This chain is Aspartate--tRNA ligase, found in Shewanella woodyi (strain ATCC 51908 / MS32).